The chain runs to 84 residues: Large ribosomal subunit protein bL27 (84 aa).

The disordered stretch occupies residues 1 to 22; it reads MAHKKAGGSTRNGRDSESKRLG.

It belongs to the bacterial ribosomal protein bL27 family.

In Shewanella woodyi (strain ATCC 51908 / MS32), this protein is Large ribosomal subunit protein bL27.